Reading from the N-terminus, the 581-residue chain is Proline--tRNA ligase (581 aa).

This sequence belongs to the class-II aminoacyl-tRNA synthetase family. ProS type 1 subfamily. In terms of assembly, homodimer.

Its subcellular location is the cytoplasm. The catalysed reaction is tRNA(Pro) + L-proline + ATP = L-prolyl-tRNA(Pro) + AMP + diphosphate. Catalyzes the attachment of proline to tRNA(Pro) in a two-step reaction: proline is first activated by ATP to form Pro-AMP and then transferred to the acceptor end of tRNA(Pro). As ProRS can inadvertently accommodate and process non-cognate amino acids such as alanine and cysteine, to avoid such errors it has two additional distinct editing activities against alanine. One activity is designated as 'pretransfer' editing and involves the tRNA(Pro)-independent hydrolysis of activated Ala-AMP. The other activity is designated 'posttransfer' editing and involves deacylation of mischarged Ala-tRNA(Pro). The misacylated Cys-tRNA(Pro) is not edited by ProRS. This is Proline--tRNA ligase from Azoarcus sp. (strain BH72).